The chain runs to 1130 residues: MAAAGQLCLLYLSAGLLSRLGAAFNLDTREDNVIRKYGDPGSLFGFSLAMHWQLQPEDKRLLLVGAPRAEALPLQRANRTGGLYSCDITARGPCTRIEFDNDADPTSESKEDQWMGVTVQSQGPGGKVVTCAHRYEKRQHVNTKQESRDIFGRCYVLSQNLRIEDDMDGGDWSFCDGRLRGHEKFGSCQQGVAATFTKDFHYIVFGAPGTYNWKGIVRVEQKNNTFFDMNIFEDGPYEVGGETEHDESLVPVPANSYLGLLFLTSVSYTDPDQFVYKTRPPREQPDTFPDVMMNSYLGFSLDSGKGIVSKDEITFVSGAPRANHSGAVVLLKRDMKSAHLLPEHIFDGEGLASSFGYDVAVVDLNKDGWQDIVIGAPQYFDRDGEVGGAVYVYMNQQGRWNNVKPIRLNGTKDSMFGIAVKNIGDINQDGYPDIAVGAPYDDLGKVFIYHGSANGINTKPTQVLKGISPYFGYSIAGNMDLDRNSYPDVAVGSLSDSVTIFRSRPVINIQKTITVTPNRIDLRQKTACGAPSGICLQVKSCFEYTANPAGYNPSISIVGTLEAEKERRKSGLSSRVQFRNQGSEPKYTQELTLKRQKQKVCMEETLWLQDNIRDKLRPIPITASVEIQEPSSRRRVNSLPEVLPILNSDEPKTAHIDVHFLKEGCGDDNVCNSNLKLEYKFCTREGNQDKFSYLPIQKGVPELVLKDQKDIALEITVTNSPSNPRNPTKDGDDAHEAKLIATFPDTLTYSAYRELRAFPEKQLSCVANQNGSQADCELGNPFKRNSNVTFYLVLSTTEVTFDTPDLDINLKLETTSNQDNLAPITAKAKVVIELLLSVSGVAKPSQVYFGGTVVGEQAMKSEDEVGSLIEYEFRVINLGKPLTNLGTATLNIQWPKEISNGKWLLYLVKVESKGLEKVTCEPQKEINSLNLTESHNSRKKREITEKQIDDNRKFSLFAERKYQTLNCSVNVNCVNIRCPLRGLDSKASLILRSRLWNSTFLEEYSKLNYLDILMRAFIDVTAAAENIRLPNAGTQVRVTVFPSKTVAQYSGVPWWIILVAILAGILMLALLVFILWKCGFFKRSRYDDSVPRYHAVRIRKEEREIKDEKYIDNLEKKQWITKWNENESYS.

Positions 1-23 (MAAAGQLCLLYLSAGLLSRLGAA) are cleaved as a signal peptide. The Extracellular portion of the chain corresponds to 24–1050 (FNLDTREDNV…FPSKTVAQYS (1027 aa)). FG-GAP repeat units follow at residues 30 to 95 (EDNV…GPCT), 101 to 166 (NDAD…IEDD), 176 to 229 (DGRL…FFDM), 283 to 339 (EQPD…KSAH), 340 to 402 (LLPE…RWNN), 403 to 458 (VKPI…GINT), and 459 to 518 (KPTQ…VTPN). Residue N78 is glycosylated (N-linked (GlcNAc...) asparagine). 3 disulfide bridges follow: C86–C94, C131–C154, and C175–C188. N-linked (GlcNAc...) asparagine glycans are attached at residues N223 and N323. Residues D363, N365, D367, and D371 each contribute to the Ca(2+) site. N409 is a glycosylation site (N-linked (GlcNAc...) asparagine). Ca(2+) is bound by residues D425, N427, D429, Y431, D433, D480, D482, N484, Y486, and D488. 4 disulfides stabilise this stretch: C528–C535, C541–C601, C665–C671, and C765–C776. Residues N770, N787, N930, and N966 are each glycosylated (N-linked (GlcNAc...) asparagine). 2 disulfide bridges follow: C920-C967 and C973-C978. N997 is a glycosylation site (N-linked (GlcNAc...) asparagine). The helical transmembrane segment at 1051-1076 (GVPWWIILVAILAGILMLALLVFILW) threads the bilayer. 2 positions are modified to phosphoserine: V1059 and G1064. Residues 1077–1083 (KCGFFKR) are interaction with HPS5. The Cytoplasmic segment spans residues 1077-1130 (KCGFFKRSRYDDSVPRYHAVRIRKEEREIKDEKYIDNLEKKQWITKWNENESYS). C1078 is lipidated: S-palmitoyl cysteine; by DHHC3. Positions 1079–1083 (GFFKR) match the GFFKR motif motif. Residue R1103 is modified to Phosphoserine.

Belongs to the integrin alpha chain family. Heterodimer of an alpha and a beta subunit. The alpha subunit is composed of a heavy and a light chain linked by a disulfide bond. Alpha-6 associates with either beta-1 (ITGB1) or beta-4 (ITGB4) to form ITGA6:ITGB1 and ITGA6:ITGB4, respectively. ITGA6:ITGB1 is found in a complex with CD9; interaction takes place in oocytes and is involved in sperm-egg fusion. ITGA6:ITGB4 is found in a ternary complex with NRG1 and ERBB3. ITGA6:ITGB4 is found in a ternary complex with IGF1 and IGF1R. ITGA6:ITGB4 interacts with IGF2. Interacts with ADAM9. Interacts with RAB21. Interacts with MDK. ITGA6:ITGB1 interacts with MDK; this interaction mediates MDK-induced neurite outgrowth. Interacts with CD82; this interaction down-regulates ITGA6-mediated cell adhesion. Isoforms containing segment A, but not segment B, are the major targets for PMA-induced phosphorylation. Phosphorylation occurs on 'Ser-1103' of isoform alpha-6X1X2A. Phosphorylation is not required for the induction of integrin alpha-6A/beta-1 high affinity but may reduce the affinity for ligand. In terms of processing, undergoes PLAU-mediated cleavage at residues Arg-634-635-Arg in a time-dependent manner to produce processed integrin alpha-6 (alpha6p). Production of alpha6p enhances prostate cancer cell invasion and migration. Post-translationally, palmitoylation by DHHC3 enhances stability and cell surface expression. As to expression, integrin alpha-6/beta-4 is predominantly expressed by epithelia. Isoforms containing segment X1 are ubiquitously expressed. Isoforms containing segment X1X2 are expressed in heart, kidney, placenta, colon, duodenum, myoblasts and myotubes, and in a limited number of cell lines; they are always coexpressed with the ubiquitous isoform containing segment X1. In some tissues (e.g. Salivary gland), isoforms containing cytoplasmic segment A and isoforms containing segment B are detected while in others, only isoforms containing one cytoplasmic segment are found (segment A in epidermis and segment B in kidney). Processed integrin alpha-6: Expressed at low levels in normal prostate tissue with elevated levels in prostate cancer tissue (at protein level).

The protein localises to the cell membrane. Integrin alpha-6/beta-1 (ITGA6:ITGB1) is a receptor for laminin on platelets. Integrin alpha-6/beta-1 (ITGA6:ITGB1) is present in oocytes and is involved in sperm-egg fusion. Integrin alpha-6/beta-4 (ITGA6:ITGB4) is a receptor for laminin in epithelial cells and it plays a critical structural role in the hemidesmosome. ITGA6:ITGB4 binds to NRG1 (via EGF domain) and this binding is essential for NRG1-ERBB signaling. ITGA6:ITGB4 binds to IGF1 and this binding is essential for IGF1 signaling. ITGA6:ITGB4 binds to IGF2 and this binding is essential for IGF2 signaling. The protein is Integrin alpha-6 (ITGA6) of Homo sapiens (Human).